The sequence spans 212 residues: Pyridoxine/pyridoxamine 5'-phosphate oxidase (212 aa).

Substrate contacts are provided by residues 7-10 (RAKY) and Lys-65. FMN-binding positions include 60-65 (RTVLLK), 75-76 (FT), Lys-82, and Gln-104. Positions 122, 126, and 130 each coordinate substrate. FMN-binding positions include 139–140 (QS) and Trp-184. 190-192 (RLH) is a substrate binding site. Position 194 (Arg-194) interacts with FMN.

The protein belongs to the pyridoxamine 5'-phosphate oxidase family. In terms of assembly, homodimer. It depends on FMN as a cofactor.

The enzyme catalyses pyridoxamine 5'-phosphate + O2 + H2O = pyridoxal 5'-phosphate + H2O2 + NH4(+). It catalyses the reaction pyridoxine 5'-phosphate + O2 = pyridoxal 5'-phosphate + H2O2. Its pathway is cofactor metabolism; pyridoxal 5'-phosphate salvage; pyridoxal 5'-phosphate from pyridoxamine 5'-phosphate: step 1/1. It participates in cofactor metabolism; pyridoxal 5'-phosphate salvage; pyridoxal 5'-phosphate from pyridoxine 5'-phosphate: step 1/1. Catalyzes the oxidation of either pyridoxine 5'-phosphate (PNP) or pyridoxamine 5'-phosphate (PMP) into pyridoxal 5'-phosphate (PLP). This is Pyridoxine/pyridoxamine 5'-phosphate oxidase from Aliarcobacter butzleri (strain RM4018) (Arcobacter butzleri).